The primary structure comprises 199 residues: MVFAIRIRQFHTTLVSAEKNGLQKLIPPRLKTIWNQMLVETKGAGNGPERFEMIRQKYKALTADEIQKYKNKLQEQFDAEKKRFMETLRSFTPTEIDSENRRRSKEAHSTGSRYYRLRHPDVPKKPSSAFILFYKELRNNPKLRQELGIPEAISTLVEETQNASKAWKELAEDKKKPFIDKSKALKEQYDKFMKEAGFR.

A DNA-binding region (HMG box) is located at residues 123 to 197 (PKKPSSAFIL…QYDKFMKEAG (75 aa)).

In terms of assembly, monomer.

It localises to the nucleus. Binds to cytosines in base mismatches and opposite chemically altered guanines. May be involved in repair of DNA damage. The polypeptide is Cytosine-containing mismatch-binding protein 1 (Schizosaccharomyces pombe (strain 972 / ATCC 24843) (Fission yeast)).